A 428-amino-acid polypeptide reads, in one-letter code: Trigger factor (428 aa).

A PPIase FKBP-type domain is found at 163–248 (GDTAVIDFEG…IKEIKVKELP (86 aa)).

This sequence belongs to the FKBP-type PPIase family. Tig subfamily.

Its subcellular location is the cytoplasm. It carries out the reaction [protein]-peptidylproline (omega=180) = [protein]-peptidylproline (omega=0). Functionally, involved in protein export. Acts as a chaperone by maintaining the newly synthesized protein in an open conformation. Functions as a peptidyl-prolyl cis-trans isomerase. The chain is Trigger factor from Ruminiclostridium cellulolyticum (strain ATCC 35319 / DSM 5812 / JCM 6584 / H10) (Clostridium cellulolyticum).